The chain runs to 513 residues: Zinc finger CCCH-type with G patch domain-containing protein (513 aa).

The residue at position 1 (M1) is an N-acetylmethionine. The segment at 92–131 is disordered; it reads PVAPGAELETVPSRETGPGPTEPGQEEDDGEDEEGGAALS. The segment covering 115-126 has biased composition (acidic residues); that stretch reads GQEEDDGEDEEG. The C3H1-type zinc finger occupies 176-202; that stretch reads KSLKPCPFFLEGKCRFQENCRFSHGQV. Residues 267-298 are disordered; that stretch reads LPPLRTDPAGSSDSDGSDADDPSYARVVEPGA. 2 positions are modified to phosphoserine: S278 and S355. A G-patch domain is found at 315–361; sequence TRGIGSRLLAKMGYEFGKGLGRRADGRVEPVHAVVLPRGKSLDQCAE. Disordered stretches follow at residues 367 to 394 and 493 to 513; these read TRAG…PPPR and QEAG…MTEF. Basic and acidic residues predominate over residues 497–513; that stretch reads LQREQRKADTHKKMTEF.

Interacts with CHD4/Mi-2; the interaction is direct.

Its subcellular location is the nucleus. Its function is as follows. Transcription repressor that specifically binds the 5'-GGAG[GA]A[GA]A-3' consensus sequence. Represses transcription by recruiting the chromatin multiprotein complex NuRD to target promoters. Negatively regulates expression of EGFR, a gene involved in cell proliferation, survival and migration. Its ability to repress genes of the EGFR pathway suggest it may act as a tumor suppressor. The protein is Zinc finger CCCH-type with G patch domain-containing protein (ZGPAT) of Ovis aries (Sheep).